We begin with the raw amino-acid sequence, 195 residues long: Adenylate kinase (195 aa).

Gly11–Thr16 contributes to the ATP binding site. The segment at Ser31–Val60 is NMP. Residues Thr32, Arg37, Arg58 to Val60, Gly86 to Arg89, and Gln93 each bind AMP. The LID stretch occupies residues Leu127–Asp137. An ATP-binding site is contributed by Arg128. The AMP site is built by Arg134 and Arg145. Gln173 is an ATP binding site.

Belongs to the adenylate kinase family. Monomer.

Its subcellular location is the cytoplasm. The catalysed reaction is AMP + ATP = 2 ADP. It participates in purine metabolism; AMP biosynthesis via salvage pathway; AMP from ADP: step 1/1. Functionally, catalyzes the reversible transfer of the terminal phosphate group between ATP and AMP. Plays an important role in cellular energy homeostasis and in adenine nucleotide metabolism. In Cyanothece sp. (strain PCC 7425 / ATCC 29141), this protein is Adenylate kinase.